Here is a 919-residue protein sequence, read N- to C-terminus: Isoleucine--tRNA ligase (919 aa).

The 'HIGH' region motif lies at Pro-57–His-67. Glu-569 lines the L-isoleucyl-5'-AMP pocket. Residues Lys-610–Ser-614 carry the 'KMSKS' region motif. ATP is bound at residue Lys-613. Zn(2+) is bound by residues Cys-895, Cys-898, Cys-910, and Cys-913.

The protein belongs to the class-I aminoacyl-tRNA synthetase family. IleS type 1 subfamily. As to quaternary structure, monomer. Zn(2+) is required as a cofactor.

It is found in the cytoplasm. It carries out the reaction tRNA(Ile) + L-isoleucine + ATP = L-isoleucyl-tRNA(Ile) + AMP + diphosphate. In terms of biological role, catalyzes the attachment of isoleucine to tRNA(Ile). As IleRS can inadvertently accommodate and process structurally similar amino acids such as valine, to avoid such errors it has two additional distinct tRNA(Ile)-dependent editing activities. One activity is designated as 'pretransfer' editing and involves the hydrolysis of activated Val-AMP. The other activity is designated 'posttransfer' editing and involves deacylation of mischarged Val-tRNA(Ile). In Sulfurimonas denitrificans (strain ATCC 33889 / DSM 1251) (Thiomicrospira denitrificans (strain ATCC 33889 / DSM 1251)), this protein is Isoleucine--tRNA ligase.